The following is a 78-amino-acid chain: DNA-directed RNA polymerase subunit omega (78 aa).

Belongs to the RNA polymerase subunit omega family. In cyanobacteria the RNAP catalytic core is composed of 2 alpha, 1 beta, 1 beta', 1 gamma and 1 omega subunit. When a sigma factor is associated with the core the holoenzyme is formed, which can initiate transcription.

The catalysed reaction is RNA(n) + a ribonucleoside 5'-triphosphate = RNA(n+1) + diphosphate. Its function is as follows. Promotes RNA polymerase assembly. Latches the N- and C-terminal regions of the beta' subunit thereby facilitating its interaction with the beta and alpha subunits. The chain is DNA-directed RNA polymerase subunit omega from Nostoc punctiforme (strain ATCC 29133 / PCC 73102).